The sequence spans 131 residues: Snaclec macrovipecetin subunit alpha (131 aa).

3 cysteine pairs are disulfide-bonded: Cys2-Cys13, Cys30-Cys125, and Cys100-Cys117. A C-type lectin domain is found at 9–126; it reads HEEHCYKVFR…CEDKNPFICK (118 aa).

Heterodimer of subunits alpha and beta; disulfide-linked. As to expression, expressed by the venom gland.

The protein resides in the secreted. Interferes with one step of hemostasis (modulation of platelet aggregation, or coagulation cascade, for example). This chain is Snaclec macrovipecetin subunit alpha, found in Macrovipera lebetinus (Levantine viper).